A 34-amino-acid chain; its full sequence is Photosystem II reaction center protein Psb30 (34 aa).

Residues 5-25 (VLAQLTVLAFVIAVGPITLIW) form a helical membrane-spanning segment.

The protein belongs to the Psb30/Ycf12 family. As to quaternary structure, PSII is composed of 1 copy each of membrane proteins PsbA, PsbB, PsbC, PsbD, PsbE, PsbF, PsbH, PsbI, PsbJ, PsbK, PsbL, PsbM, PsbT, PsbX, PsbY, PsbZ, Psb30/Ycf12, peripheral proteins of the oxygen-evolving complex and a large number of cofactors. It forms dimeric complexes.

Its subcellular location is the plastid. It localises to the chloroplast thylakoid membrane. In terms of biological role, a core subunit of photosystem II (PSII), probably helps stabilize the reaction center. This chain is Photosystem II reaction center protein Psb30, found in Cyanidioschyzon merolae (strain NIES-3377 / 10D) (Unicellular red alga).